The sequence spans 1388 residues: DNA-directed RNA polymerase subunit beta' (1388 aa).

Residues Cys-76, Cys-78, Cys-91, and Cys-94 each coordinate Zn(2+). Mg(2+) is bound by residues Asp-467, Asp-469, and Asp-471. Zn(2+) contacts are provided by Cys-810, Cys-884, Cys-891, and Cys-894.

It belongs to the RNA polymerase beta' chain family. The RNAP catalytic core consists of 2 alpha, 1 beta, 1 beta' and 1 omega subunit. When a sigma factor is associated with the core the holoenzyme is formed, which can initiate transcription. Requires Mg(2+) as cofactor. The cofactor is Zn(2+).

The catalysed reaction is RNA(n) + a ribonucleoside 5'-triphosphate = RNA(n+1) + diphosphate. Its function is as follows. DNA-dependent RNA polymerase catalyzes the transcription of DNA into RNA using the four ribonucleoside triphosphates as substrates. The chain is DNA-directed RNA polymerase subunit beta' from Lawsonia intracellularis (strain PHE/MN1-00).